The sequence spans 206 residues: Macrophage immunometabolism regulator (206 aa).

The residue at position 1 (Met1) is an N-acetylmethionine. A disordered region spans residues 1–41 (MEVDINGESRSTLTTLPFPGAEANSPGKAEAEKPRCSSTPC). Phosphoserine occurs at positions 25, 140, and 167.

Belongs to the UNC119-binding protein family. In terms of assembly, interacts with UNC119 and UNC119B; interaction preferentially takes place when UNC119 and UNC119B are unliganded with myristoylated proteins.

Its subcellular location is the cytoplasm. It is found in the cell projection. It localises to the cilium. In terms of biological role, regulates the macrophage function, by enhancing the resolution of inflammation and wound repair functions mediated by M2 macrophages. The regulation of macrophage function is, due at least in part, to its ability to inhibit glycolysis. May also play a role in trafficking of proteins via its interaction with UNC119 and UNC119B cargo adapters: may help the release of UNC119 and UNC119B cargo or the recycling of UNC119 and UNC119B. May play a role in ciliary membrane localization via its interaction with UNC119B and protein transport into photoreceptor cells. The chain is Macrophage immunometabolism regulator (MACIR) from Pongo abelii (Sumatran orangutan).